Reading from the N-terminus, the 447-residue chain is Phosphoglucosamine mutase (447 aa).

Ser106 acts as the Phosphoserine intermediate in catalysis. Ser106, Asp245, Asp247, and Asp249 together coordinate Mg(2+). Ser106 is modified (phosphoserine).

Belongs to the phosphohexose mutase family. Requires Mg(2+) as cofactor. Post-translationally, activated by phosphorylation.

It carries out the reaction alpha-D-glucosamine 1-phosphate = D-glucosamine 6-phosphate. Functionally, catalyzes the conversion of glucosamine-6-phosphate to glucosamine-1-phosphate. In Cupriavidus metallidurans (strain ATCC 43123 / DSM 2839 / NBRC 102507 / CH34) (Ralstonia metallidurans), this protein is Phosphoglucosamine mutase.